Consider the following 456-residue polypeptide: Major facilitator superfamily domain-containing protein 10 (456 aa).

A run of 3 helical transmembrane segments spans residues 25 to 45 (VIIV…LLLP), 87 to 107 (VLFG…SAPL), and 114 to 136 (YLGR…AVWA). A glycan (N-linked (GlcNAc...) asparagine) is linked at Asn-159. 8 helical membrane passes run 179–199 (AVIG…GAFL), 203–223 (MVPW…FCFL), 278–298 (LVYF…SFLA), 311–328 (KMFF…GTYA), 345–365 (LLLV…TLGL), 366–386 (GLML…TMVS), 403–423 (SLGA…YWLT), and 424–444 (GAQV…LLLW).

Belongs to the major facilitator superfamily. Esxpressed in luminal membrane of renal tubules. Expressed at the surface of eosinophils (at protein level).

The protein localises to the nucleus inner membrane. It localises to the cell membrane. In terms of biological role, probable organic anion transporter which may serve as a transporter for some non-steroidal anti-inflammatory drugs (NSAIDs) as well as other organic anions across the luminal membranes of renal proximal tubules at the final excretion step into the urine. This chain is Major facilitator superfamily domain-containing protein 10 (Mfsd10), found in Mus musculus (Mouse).